A 376-amino-acid chain; its full sequence is UPF0754 membrane protein SE_1527 (376 aa).

2 consecutive transmembrane segments (helical) span residues 4–24 (ILLVVFMIILGAIIGGVTNMI) and 356–376 (TLGFILGGIIGFFQGVIAIFV).

It belongs to the UPF0754 family.

The protein resides in the cell membrane. The polypeptide is UPF0754 membrane protein SE_1527 (Staphylococcus epidermidis (strain ATCC 12228 / FDA PCI 1200)).